A 234-amino-acid polypeptide reads, in one-letter code: Adenosine 5'-phosphosulfate reductase (234 aa).

The [4Fe-4S] cluster site is built by cysteine 120, cysteine 121, cysteine 203, and cysteine 206. The Nucleophile; cysteine thiosulfonate intermediate role is filled by cysteine 229.

The protein belongs to the PAPS reductase family. CysH subfamily. It depends on [4Fe-4S] cluster as a cofactor.

Its subcellular location is the cytoplasm. It carries out the reaction [thioredoxin]-disulfide + sulfite + AMP + 2 H(+) = adenosine 5'-phosphosulfate + [thioredoxin]-dithiol. The protein operates within sulfur metabolism; hydrogen sulfide biosynthesis; sulfite from sulfate. Catalyzes the formation of sulfite from adenosine 5'-phosphosulfate (APS) using thioredoxin as an electron donor. The polypeptide is Adenosine 5'-phosphosulfate reductase (Bacillus cereus (strain ZK / E33L)).